Here is a 249-residue protein sequence, read N- to C-terminus: Glutathione S-transferase tcpG (249 aa).

The GST N-terminal domain maps to 20–109; the sequence is LYVRKAIPAP…YLCDKHDKDG (90 aa). Residues 115–249 form the GST C-terminal domain; it reads NATERAQVTS…TEEEIELHGR (135 aa).

Belongs to the GST superfamily.

The catalysed reaction is RX + glutathione = an S-substituted glutathione + a halide anion + H(+). It participates in secondary metabolite biosynthesis. In terms of biological role, glutathione S-transferase; part of the gene cluster that mediates the biosynthesis of an unusual class of epipolythiodioxopiperazines (ETPs) lacking the reactive thiol group important for toxicity. Firstly, L-tyrosine is prenylated by tcpD, before undergoing condensation with L-glycine in a reaction catalyzed by the NRPS tcpP leading to the diketopiperazine (DKP) backbone. Afterwards the alpha-carbon of tyrosine is oxidized by the cytochrome P450 tcpC to form a hydroxyl group. However, in contrast other ETP biosynthesis pathways studied so far, tcpC is not able to bishydroxylate the DKP at both alpha-carbon positions, but hydroxylates the alpha-carbon of the tyrosine part and the nitrogen of the glycine part. The next steps involve an alpha,beta-elimination reaction catalyzed by tcpI, a methylation by the methyltransferase tcpN the action of the four enzyme cascade tcpG/K/J/I. Due to a dysfunctional cytochrome P450 monooxygenase tcpC, the pathway leads to the biosynthesis of probable non-toxic metabolites lacking the reactive thiol group. The protein is Glutathione S-transferase tcpG of Claviceps purpurea (strain 20.1) (Ergot fungus).